The sequence spans 365 residues: UPF0283 membrane protein Avi_2471 (365 aa).

The span at 1 to 10 (MSKAPEDQRP) shows a compositional bias: basic and acidic residues. The disordered stretch occupies residues 1–47 (MSKAPEDQRPMPRRPAAFSLEEPSSSPARPPFAEAQEPQRRAPKSFD). Helical transmembrane passes span 83 to 103 (FGKLAGAAFGALASFAIGLWI) and 117 to 137 (LGYTALTLLGIGLLALTVVVI).

The protein belongs to the UPF0283 family.

The protein localises to the cell inner membrane. The protein is UPF0283 membrane protein Avi_2471 of Allorhizobium ampelinum (strain ATCC BAA-846 / DSM 112012 / S4) (Agrobacterium vitis (strain S4)).